The chain runs to 731 residues: Ubiquitin carboxyl-terminal hydrolase 17 (731 aa).

The Zn(2+) site is built by cysteine 57, cysteine 60, cysteine 68, cysteine 71, cysteine 77, cysteine 81, histidine 90, and cysteine 94. The MYND-type zinc-finger motif lies at cysteine 57 to cysteine 94. Disordered stretches follow at residues tyrosine 171–asparagine 219 and leucine 262–lysine 281. 2 stretches are compositionally biased toward polar residues: residues glycine 207 to asparagine 219 and lysine 265 to lysine 281. Residues phenylalanine 329–aspartate 633 form the USP domain. Cysteine 338 serves as the catalytic Nucleophile. Histidine 592 acts as the Proton acceptor in catalysis. Residues proline 637–serine 702 are disordered. Over residues aspartate 677 to serine 701 the composition is skewed to low complexity.

Belongs to the peptidase C19 family.

The catalysed reaction is Thiol-dependent hydrolysis of ester, thioester, amide, peptide and isopeptide bonds formed by the C-terminal Gly of ubiquitin (a 76-residue protein attached to proteins as an intracellular targeting signal).. Recognizes and hydrolyzes the peptide bond at the C-terminal Gly of ubiquitin. Involved in the processing of poly-ubiquitin precursors as well as that of ubiquitinated proteins. The polypeptide is Ubiquitin carboxyl-terminal hydrolase 17 (UBP17) (Arabidopsis thaliana (Mouse-ear cress)).